The primary structure comprises 384 residues: GTPase Obg (384 aa).

The 159-residue stretch at Met-1–Leu-159 folds into the Obg domain. A disordered region spans residues Asn-72 to Thr-94. The region spanning Ala-160–Glu-333 is the OBG-type G domain. GTP is bound by residues Gly-166–Ser-173, Phe-191–Ile-195, Asp-213–Gly-216, Asn-283–Asp-286, and Ala-314–Leu-316. Mg(2+) is bound by residues Ser-173 and Thr-193. A disordered region spans residues Glu-358–Lys-384. Acidic residues predominate over residues Val-360–Asp-377.

This sequence belongs to the TRAFAC class OBG-HflX-like GTPase superfamily. OBG GTPase family. In terms of assembly, monomer. Mg(2+) is required as a cofactor.

It localises to the cytoplasm. An essential GTPase which binds GTP, GDP and possibly (p)ppGpp with moderate affinity, with high nucleotide exchange rates and a fairly low GTP hydrolysis rate. Plays a role in control of the cell cycle, stress response, ribosome biogenesis and in those bacteria that undergo differentiation, in morphogenesis control. The chain is GTPase Obg from Idiomarina loihiensis (strain ATCC BAA-735 / DSM 15497 / L2-TR).